The primary structure comprises 454 residues: Argininosuccinate lyase (454 aa).

This sequence belongs to the lyase 1 family. Argininosuccinate lyase subfamily.

Its subcellular location is the cytoplasm. The catalysed reaction is 2-(N(omega)-L-arginino)succinate = fumarate + L-arginine. It participates in amino-acid biosynthesis; L-arginine biosynthesis; L-arginine from L-ornithine and carbamoyl phosphate: step 3/3. In Herpetosiphon aurantiacus (strain ATCC 23779 / DSM 785 / 114-95), this protein is Argininosuccinate lyase.